We begin with the raw amino-acid sequence, 149 residues long: Transcriptional repressor NrdR (149 aa).

A zinc finger lies at 3 to 34 (CPFCAAVDTKVIDSRLVSDGSQVRRRRQCLDC). Positions 49 to 139 (PRVIKSDDVR…VYRSFEDIRE (91 aa)) constitute an ATP-cone domain.

The protein belongs to the NrdR family. Requires Zn(2+) as cofactor.

In terms of biological role, negatively regulates transcription of bacterial ribonucleotide reductase nrd genes and operons by binding to NrdR-boxes. In Yersinia enterocolitica serotype O:8 / biotype 1B (strain NCTC 13174 / 8081), this protein is Transcriptional repressor NrdR.